A 121-amino-acid chain; its full sequence is Small ribosomal subunit protein uS13 (121 aa).

Residues 91-121 form a disordered region; that stretch reads HRKGLPVRGQRTRTNARTRKGKKKTVAGKKK.

The protein belongs to the universal ribosomal protein uS13 family. As to quaternary structure, part of the 30S ribosomal subunit. Forms a loose heterodimer with protein S19. Forms two bridges to the 50S subunit in the 70S ribosome.

Functionally, located at the top of the head of the 30S subunit, it contacts several helices of the 16S rRNA. In the 70S ribosome it contacts the 23S rRNA (bridge B1a) and protein L5 of the 50S subunit (bridge B1b), connecting the 2 subunits; these bridges are implicated in subunit movement. Contacts the tRNAs in the A and P-sites. This chain is Small ribosomal subunit protein uS13, found in Treponema denticola (strain ATCC 35405 / DSM 14222 / CIP 103919 / JCM 8153 / KCTC 15104).